The primary structure comprises 294 residues: Undecaprenyl-diphosphatase (294 aa).

The next 6 helical transmembrane spans lie at 39-59 (PGAA…ILYF), 93-113 (ATLG…GFTL), 123-143 (NLWI…VVDA), 198-218 (SFLM…VKAV), 232-252 (PTLV…IGFL), and 268-288 (IGLA…AIDP).

The protein belongs to the UppP family.

It is found in the cell membrane. It catalyses the reaction di-trans,octa-cis-undecaprenyl diphosphate + H2O = di-trans,octa-cis-undecaprenyl phosphate + phosphate + H(+). Catalyzes the dephosphorylation of undecaprenyl diphosphate (UPP). Confers resistance to bacitracin. The chain is Undecaprenyl-diphosphatase from Bifidobacterium longum subsp. infantis (strain ATCC 15697 / DSM 20088 / JCM 1222 / NCTC 11817 / S12).